The primary structure comprises 115 residues: Large ribosomal subunit protein bL20 (115 aa).

This sequence belongs to the bacterial ribosomal protein bL20 family.

Binds directly to 23S ribosomal RNA and is necessary for the in vitro assembly process of the 50S ribosomal subunit. It is not involved in the protein synthesizing functions of that subunit. This chain is Large ribosomal subunit protein bL20, found in Prochlorococcus marinus (strain AS9601).